The following is a 613-amino-acid chain: Putative two-component response regulator ARR21 (613 aa).

In terms of domain architecture, Response regulatory spans 17-131 (NVMVVDDDHV…DLTKIYQFAL (115 aa)). Residue Asp-68 is modified to 4-aspartylphosphate. Residues 178–195 (KSDSRTVNSTNGSCVSTD) show a composition bias toward polar residues. A disordered region spans residues 178–223 (KSDSRTVNSTNGSCVSTDGSRKNRKRKPNGGPSDDGESMSQPAKKK). Residues 221–224 (KKKK) carry the Nuclear localization signal motif. The myb-like GARP DNA-binding region spans 224–274 (KIQWTDSLHDLFLQAIRHIGLDKAVPKKILAFMSVPYLTRENVASHLQKYR).

The protein belongs to the ARR family. Type-B subfamily. As to quaternary structure, binds the target DNA as a monomer. In terms of processing, two-component system major event consists of a His-to-Asp phosphorelay between a sensor histidine kinase (HK) and a response regulator (RR). In plants, the His-to-Asp phosphorelay involves an additional intermediate named Histidine-containing phosphotransfer protein (HPt). This multistep phosphorelay consists of a His-Asp-His-Asp sequential transfer of a phosphate group between first a His and an Asp of the HK protein, followed by the transfer to a conserved His of the HPt protein and finally the transfer to an Asp in the receiver domain of the RR protein. In terms of tissue distribution, mainly expressed in siliques. Also found in germinating seedlings, stems, flowers and roots, but not in rosette leaves.

It localises to the nucleus. In terms of biological role, putative transcriptional activator that binds specifically to the DNA sequence 5'-[AG]GATT-3'. Functions as a response regulator involved in His-to-Asp phosphorelay signal transduction system. Phosphorylation of the Asp residue in the receiver domain activates the ability of the protein to promote the transcription of target genes. Could directly activate some type-A response regulators in response to cytokinins. In Arabidopsis thaliana (Mouse-ear cress), this protein is Putative two-component response regulator ARR21 (ARR21).